A 455-amino-acid polypeptide reads, in one-letter code: MLDIKLIRENPEIVKRDLIKRGETEKLKWIDEILELDKKWRENLKKINQLRKERNQLAVQIGKRKKAGEPIDDLLKRSNEIVKQIEELEKENEELKKKIDYYLWRLPNITHESVPVGESDEDNVPIRFWGKAKVWEGFLETFKEQSLGKMEYEVLSWRPRLHVDMLELLRGADLERAAKVSGARFYYLLNELVILDLALIRFALDKLIEKGFTPVIPPYMVRRFVEEGATTFDDFEDVIYKVEGEDLYLIPTAEHPLAGMHANEILDGKDLPLLYVGVSPCFRKEAGTAGKDTKGIFRVHQFHKVEQFVYSRPEESWEWHERIIANAEEIFQALEIPYRVVNICTGDLGYVAAKKYDIEAWMAGQGKFREVVSASNCTDWQARRLNIRFRDKTHEKPRFVHTLNSTAIATSRAIVAILENHQTEEGVVKLPKALWKYTGFKEILPAHMKEKCCQD.

L-serine is bound at residue 252 to 254 (TAE). ATP contacts are provided by residues 283–285 (RKE) and valine 299. Residue glutamate 306 participates in L-serine binding. 370–373 (EVVS) lines the ATP pocket. Position 406 (threonine 406) interacts with L-serine.

This sequence belongs to the class-II aminoacyl-tRNA synthetase family. Type-1 seryl-tRNA synthetase subfamily. In terms of assembly, homodimer. The tRNA molecule binds across the dimer.

The protein resides in the cytoplasm. It catalyses the reaction tRNA(Ser) + L-serine + ATP = L-seryl-tRNA(Ser) + AMP + diphosphate + H(+). It carries out the reaction tRNA(Sec) + L-serine + ATP = L-seryl-tRNA(Sec) + AMP + diphosphate + H(+). Its pathway is aminoacyl-tRNA biosynthesis; selenocysteinyl-tRNA(Sec) biosynthesis; L-seryl-tRNA(Sec) from L-serine and tRNA(Sec): step 1/1. Functionally, catalyzes the attachment of serine to tRNA(Ser). Is also able to aminoacylate tRNA(Sec) with serine, to form the misacylated tRNA L-seryl-tRNA(Sec), which will be further converted into selenocysteinyl-tRNA(Sec). The sequence is that of Serine--tRNA ligase from Thermococcus kodakarensis (strain ATCC BAA-918 / JCM 12380 / KOD1) (Pyrococcus kodakaraensis (strain KOD1)).